The primary structure comprises 417 residues: Serine/threonine transporter SstT (417 aa).

The next 8 helical transmembrane spans lie at 21 to 41 (ILAGLIAGILLAWLAPEVAKM), 49 to 69 (FISALKAVAPVLVWVLVMASI), 83 to 103 (ILVLYLLATFFAALTAVVASF), 142 to 162 (ALINGNYMGILAWAIGLGLAL), 193 to 213 (IGIFGLVSSTIATTGFKALAG), 218 to 238 (LLVLIGCMLFVALVVNPLIVF), 291 to 311 (IPLGATINMGGAAITITILTL), and 331 to 351 (LVAAICACGASGVAGGSLLLI).

The protein belongs to the dicarboxylate/amino acid:cation symporter (DAACS) (TC 2.A.23) family.

It localises to the cell inner membrane. It catalyses the reaction L-serine(in) + Na(+)(in) = L-serine(out) + Na(+)(out). The enzyme catalyses L-threonine(in) + Na(+)(in) = L-threonine(out) + Na(+)(out). Its function is as follows. Involved in the import of serine and threonine into the cell, with the concomitant import of sodium (symport system). The polypeptide is Serine/threonine transporter SstT (Proteus mirabilis (strain HI4320)).